The following is a 128-amino-acid chain: Conopressin-conophysin (128 aa).

A signal peptide spans 1–27 (MTRSAMQMGRLTLVLCLLLLLLLTTQA). An intrachain disulfide couples Cys-28 to Cys-33. Residue Gly-36 is modified to Glycine amide. A propeptide spanning residues 37 to 44 (GKRDVDER) is cleaved from the precursor. 7 disulfide bridges follow: Cys-50/Cys-90, Cys-53/Cys-64, Cys-58/Cys-80, Cys-65/Cys-70, Cys-97/Cys-115, Cys-109/Cys-127, and Cys-116/Cys-121.

It belongs to the vasopressin/oxytocin family. In terms of tissue distribution, expressed by the venom gland.

Its subcellular location is the secreted. In terms of biological role, targets vasopressin-oxytocin related receptors. Is more active on fish receptors than on their human counterparts, supporting an evolved role of this conopressin in the envenomation process. Acts as an agonist on zebrafish vasopressin receptors V1a1R (EC(50)=10.6 nM), V1a2R (EC(50)=44.06 nM, partial agonist), V2R (EC(50)=299.2 nM) and oxytocin receptor (EC(50)=353.73 nM, partial agonist). Shows a weaker activity on human receptors AVPR1B (EC(50)=51.92 nM), AVPR1A (EC(50)=123.78 nM), AVPR2 (EC(50)=299.2 nM) and oxytocin (OXTR) receptor (EC(50)=455.66 nM, partial agonist). In vivo, exhibits grooming and scratching behavior in mice, following intracerebral injection. The protein is Conopressin-conophysin of Conus geographus (Geography cone).